Here is a 300-residue protein sequence, read N- to C-terminus: NAD kinase (300 aa).

The active-site Proton acceptor is Asp-75. Residues 75–76, 149–150, Arg-177, Asp-179, 190–195, Ala-214, and Gln-248 each bind NAD(+); these read DG, ND, and TAYALS.

It belongs to the NAD kinase family. A divalent metal cation serves as cofactor.

Its subcellular location is the cytoplasm. The enzyme catalyses NAD(+) + ATP = ADP + NADP(+) + H(+). In terms of biological role, involved in the regulation of the intracellular balance of NAD and NADP, and is a key enzyme in the biosynthesis of NADP. Catalyzes specifically the phosphorylation on 2'-hydroxyl of the adenosine moiety of NAD to yield NADP. In Burkholderia vietnamiensis (strain G4 / LMG 22486) (Burkholderia cepacia (strain R1808)), this protein is NAD kinase.